The sequence spans 452 residues: Bifunctional protein GlmU (452 aa).

Positions 1–226 (MVAVAILAAG…SQEILGINDR (226 aa)) are pyrophosphorylase. Residues 7-10 (LAAG), lysine 21, glutamine 73, and 78-79 (GT) contribute to the UDP-N-acetyl-alpha-D-glucosamine site. A Mg(2+)-binding site is contributed by aspartate 103. 4 residues coordinate UDP-N-acetyl-alpha-D-glucosamine: glycine 140, glutamate 155, asparagine 170, and asparagine 224. Asparagine 224 lines the Mg(2+) pocket. The segment at 227–247 (LQLADSFRILQERIRQQWMLA) is linker. The interval 248–452 (GVTLVDPTSI…ENWSTPTTEQ (205 aa)) is N-acetyltransferase. UDP-N-acetyl-alpha-D-glucosamine contacts are provided by arginine 329 and lysine 347. Histidine 359 acts as the Proton acceptor in catalysis. UDP-N-acetyl-alpha-D-glucosamine is bound by residues tyrosine 362 and asparagine 373. Residues alanine 376, 382-383 (NY), alanine 419, and arginine 436 each bind acetyl-CoA.

This sequence in the N-terminal section; belongs to the N-acetylglucosamine-1-phosphate uridyltransferase family. The protein in the C-terminal section; belongs to the transferase hexapeptide repeat family. In terms of assembly, homotrimer. Mg(2+) serves as cofactor.

It localises to the cytoplasm. It carries out the reaction alpha-D-glucosamine 1-phosphate + acetyl-CoA = N-acetyl-alpha-D-glucosamine 1-phosphate + CoA + H(+). The catalysed reaction is N-acetyl-alpha-D-glucosamine 1-phosphate + UTP + H(+) = UDP-N-acetyl-alpha-D-glucosamine + diphosphate. The protein operates within nucleotide-sugar biosynthesis; UDP-N-acetyl-alpha-D-glucosamine biosynthesis; N-acetyl-alpha-D-glucosamine 1-phosphate from alpha-D-glucosamine 6-phosphate (route II): step 2/2. It functions in the pathway nucleotide-sugar biosynthesis; UDP-N-acetyl-alpha-D-glucosamine biosynthesis; UDP-N-acetyl-alpha-D-glucosamine from N-acetyl-alpha-D-glucosamine 1-phosphate: step 1/1. It participates in bacterial outer membrane biogenesis; LPS lipid A biosynthesis. In terms of biological role, catalyzes the last two sequential reactions in the de novo biosynthetic pathway for UDP-N-acetylglucosamine (UDP-GlcNAc). The C-terminal domain catalyzes the transfer of acetyl group from acetyl coenzyme A to glucosamine-1-phosphate (GlcN-1-P) to produce N-acetylglucosamine-1-phosphate (GlcNAc-1-P), which is converted into UDP-GlcNAc by the transfer of uridine 5-monophosphate (from uridine 5-triphosphate), a reaction catalyzed by the N-terminal domain. In Synechococcus sp. (strain ATCC 27144 / PCC 6301 / SAUG 1402/1) (Anacystis nidulans), this protein is Bifunctional protein GlmU.